A 217-amino-acid polypeptide reads, in one-letter code: Ras-related protein RGP2 (217 aa).

GTP-binding positions include 19-26, 67-71, and 125-128; these read GDSGVGKS, DTAGQ, and NKSD. S-geranylgeranyl cysteine attachment occurs at residues cysteine 214 and cysteine 215.

This sequence belongs to the small GTPase superfamily. Rab family.

The protein localises to the cell membrane. In Oryza sativa subsp. japonica (Rice), this protein is Ras-related protein RGP2 (RGP2).